Here is a 114-residue protein sequence, read N- to C-terminus: Protein 4 (114 aa).

The chain is Protein 4 (4) from Hordeum vulgare (Barley).